The following is a 111-amino-acid chain: Nucleoid-associated protein NMC1380 (111 aa).

Belongs to the YbaB/EbfC family. As to quaternary structure, homodimer.

The protein resides in the cytoplasm. It is found in the nucleoid. Binds to DNA and alters its conformation. May be involved in regulation of gene expression, nucleoid organization and DNA protection. In Neisseria meningitidis serogroup C / serotype 2a (strain ATCC 700532 / DSM 15464 / FAM18), this protein is Nucleoid-associated protein NMC1380.